The sequence spans 169 residues: uncharacterized protein (169 aa).

2 helical membrane-spanning segments follow: residues 62 to 84 (RWGF…LLGL) and 94 to 116 (ALML…YWWF).

It is found in the cell membrane. This is an uncharacterized protein from Archaeoglobus fulgidus (strain ATCC 49558 / DSM 4304 / JCM 9628 / NBRC 100126 / VC-16).